The following is a 332-amino-acid chain: Serpentine receptor class gamma-3 (332 aa).

7 consecutive transmembrane segments (helical) span residues 23-43, 72-92, 101-121, 144-164, 184-204, 231-251, and 263-283; these read FAYLFTAICINYRILYVIWVS, LIFTRSFLYFPQLCVSFSEIV, IYYCLLSYLIAIKPVIHIFIA, IMLIVIFLAPFLVIWNVLISD, WASLSLMQFTLIILTVLITMV, AALISVGFLLEAITQSFFAFF, and YLRFATMDILFVGSPLVLLLV.

This sequence belongs to the nematode receptor-like protein srg family.

The protein resides in the membrane. The chain is Serpentine receptor class gamma-3 (srg-3) from Caenorhabditis elegans.